Consider the following 91-residue polypeptide: Probable Fe(2+)-trafficking protein (91 aa).

Belongs to the Fe(2+)-trafficking protein family.

In terms of biological role, could be a mediator in iron transactions between iron acquisition and iron-requiring processes, such as synthesis and/or repair of Fe-S clusters in biosynthetic enzymes. In Paraburkholderia phytofirmans (strain DSM 17436 / LMG 22146 / PsJN) (Burkholderia phytofirmans), this protein is Probable Fe(2+)-trafficking protein.